Reading from the N-terminus, the 478-residue chain is Dynein regulatory complex subunit 4 (478 aa).

Positions 1 to 12 (MAPKKKGKKGKA) are enriched in basic residues. The interval 1 to 33 (MAPKKKGKKGKAKGTPIVDGLAPEDMSKEQVEE) is disordered. The interval 1 to 114 (MAPKKKGKKG…LLYEHQNNLT (114 aa)) is regulates microtubule-binding. Residues 115-258 (EMKAEGTVVM…NSLKEQMEDM (144 aa)) form a microtubule-binding region. Positions 242–427 (LNNLALINSL…KDLQYELAQV (186 aa)) form a coiled coil. The interaction with SMO stretch occupies residues 357-478 (QQKTGFKNLV…GPAGLVGTPT (122 aa)).

This sequence belongs to the DRC4 family. In terms of assembly, component of the nexin-dynein regulatory complex (N-DRC). Interacts with microtubules. Interacts with SMO. Interacts (via coiled-coil domains) with RAB3B (in GTP-bound form). Interacts with DRC1. Interacts with DRC7. Expressed in respiratory epithelial cells (at protein level). Expressed in the heart, skeletal muscle, pancreas, liver, brain, trachea and lung. Weakly or not expressed in placenta and kidney.

It localises to the cytoplasm. The protein localises to the cytoskeleton. It is found in the cell projection. The protein resides in the cilium. Its subcellular location is the flagellum. It localises to the cilium axoneme. The protein localises to the cilium basal body. It is found in the golgi apparatus. The protein resides in the flagellum axoneme. In terms of biological role, component of the nexin-dynein regulatory complex (N-DRC), a key regulator of ciliary/flagellar motility which maintains the alignment and integrity of the distal axoneme and regulates microtubule sliding in motile axonemes. Plays an important role in the assembly of the N-DRC linker. Plays dual roles at both the primary (or non-motile) cilia to regulate hedgehog signaling and in motile cilia to coordinate cilia movement. Required for proper motile cilia functioning. Positively regulates ciliary smoothened (SMO)-dependent Hedgehog (Hh) signaling pathway by facilitating the trafficking of SMO into the cilium and the stimulation of SMO activity in a GRK2-dependent manner. The sequence is that of Dynein regulatory complex subunit 4 (GAS8) from Homo sapiens (Human).